The following is a 628-amino-acid chain: MSPGGKFDFDDGGCYVGGWEAGRAHGYGVCTGPGAQGEYSGCWAHGFESLGVFTGPGGHSYQGHWQQGKREGLGVERKSRWTYRGEWLGGLKGRSGVWESVSGLRYAGLWKDGFQDGYGTETYSDGGTYQGQWQAGKRHGYGVRQSVPYHQAALLRSPRRTSLDSGHSDPPTPPPPLPLPGDEGGSPASGSRGGFVLAGPGDADGASSRKRTPAAGGFFRRSLLLSGLRAGGRRSSLGSKRGSLRSEVSSEVGSTGPPGSEASGPPAAAPPALIEGSATEVYAGEWRADRRSGFGVSQRSNGLRYEGEWLGNRRHGYGRTTRPDGSREEGKYKRNRLVHGGRVRSLLPLALRRGKVKEKVDRAVEGARRAVSAARQRQEIAAARAADALLKAVAASSVAEKAVEAARMAKLIAQDLQPMLEAPGRRPRQDSEGSDTEPLDEDSPGVYENGLTPSEGSPELPSSPASSRQPWRPPACRSPLPPGGDQGPFSSPKAWPEEWGGAGAQAEELAGYEAEDEAGMQGPGPRDGSPLLGGCSDSSGSLREEEGEDEEPLPPLRAPAGTEPEPIAMLVLRGSSSRGPDAGCLTEELGEPAATERPAQPGAANPLVVGAVALLDLSLAFLFSQLLT.

Topologically, residues 1-606 (MSPGGKFDFD…RPAQPGAANP (606 aa)) are cytoplasmic. MORN repeat units follow at residues 50 to 72 (LGVF…KREG), 74 to 95 (GVER…KGRS), 96 to 117 (GVWE…FQDG), 118 to 140 (YGTE…KRHG), 141 to 163 (YGVR…RTSL), and 164 to 186 (DSGH…EGGS). 2 disordered regions span residues 158 to 214 (PRRT…RTPA) and 231 to 276 (GGRR…LIEG). A compositionally biased stretch (pro residues) spans 170–179 (PPTPPPPLPL). 2 stretches are compositionally biased toward low complexity: residues 231-241 (GGRRSSLGSKR) and 253-272 (GSTG…APPA). 2 MORN repeats span residues 317–339 (YGRT…RLVH) and 340–362 (GGRV…KVDR). Residues 415 to 602 (DLQPMLEAPG…AATERPAQPG (188 aa)) form a disordered region. A compositionally biased stretch (acidic residues) spans 432–443 (EGSDTEPLDEDS). Low complexity-rich tracts occupy residues 453 to 467 (PSEG…PASS) and 528 to 541 (GSPL…SSGS). A helical; Anchor for type IV membrane protein membrane pass occupies residues 607–628 (LVVGAVALLDLSLAFLFSQLLT).

Belongs to the junctophilin family.

The protein resides in the cell membrane. It is found in the endoplasmic reticulum membrane. Functionally, junctophilins contribute to the formation of junctional membrane complexes (JMCs) which link the plasma membrane with the endoplasmic or sarcoplasmic reticulum in excitable cells. Provides a structural foundation for functional cross-talk between the cell surface and intracellular calcium release channels. JPH4 is brain-specific and appears to have an active role in certain neurons involved in motor coordination and memory. In Homo sapiens (Human), this protein is Junctophilin-4 (JPH4).